Reading from the N-terminus, the 502-residue chain is Glycerol kinase (502 aa).

Thr12 contacts ADP. The ATP site is built by Thr12, Thr13, and Ser14. Thr12 contributes to the sn-glycerol 3-phosphate binding site. An ADP-binding site is contributed by Arg16. Sn-glycerol 3-phosphate is bound by residues Arg82, Glu83, Tyr134, and Asp243. The glycerol site is built by Arg82, Glu83, Tyr134, Asp243, and Gln244. Thr265 and Gly308 together coordinate ADP. 4 residues coordinate ATP: Thr265, Gly308, Gln312, and Gly412. Gly412 contributes to the ADP binding site.

Belongs to the FGGY kinase family.

The enzyme catalyses glycerol + ATP = sn-glycerol 3-phosphate + ADP + H(+). It functions in the pathway polyol metabolism; glycerol degradation via glycerol kinase pathway; sn-glycerol 3-phosphate from glycerol: step 1/1. With respect to regulation, inhibited by fructose 1,6-bisphosphate (FBP). Its function is as follows. Key enzyme in the regulation of glycerol uptake and metabolism. Catalyzes the phosphorylation of glycerol to yield sn-glycerol 3-phosphate. The chain is Glycerol kinase from Methylobacterium nodulans (strain LMG 21967 / CNCM I-2342 / ORS 2060).